A 363-amino-acid polypeptide reads, in one-letter code: MKRSLNENSARSTAGCLPVPLFNQKKRNRQPLTSNPLKDDSGISTPSDNYDFPPLPTDWAWEAVNPELAPVMKTVDTGQIPHSVSRPLRSQDSVFNSIQSNTGRSQGGWSYRDGNKNTSLKTWNKNDFKPQCKRTNLVANDGKNSCPVSSGAQQQKQLRIPEPPNLSRNKETELLRQTHSSKISGCTMRGLDKNSALQTLKPNFQQNQYKKQMLDDIPEDNTLKETSLYQLQFKEKASSLRIISAVIESMKYWREHAQKTVLLFEVLAVLDSAVTPGPYYSKTFLMRDGKNTLPCVFYEIDRELPRLIRGRVHRCVGNYDQKKNIFQCVSVRPASVSEQKTFQAFVKIADVEMQYYINVMNET.

Composition is skewed to polar residues over residues Met1–Ser12, Gln30–Asp48, Ile98–Gly108, and Asn140–Gln157. Disordered stretches follow at residues Met1–Asp51, Ile98–Asp127, and Asn140–Lys170.

As to quaternary structure, component of a multiprotein complex with MEIOB and RPA2. Interacts with MEIOB. Interacts with the complex BRME1:HSF2BP:BRCA2. In terms of tissue distribution, highly expressed in adult testis.

It is found in the chromosome. In terms of biological role, meiosis-specific protein required for homologous recombination in meiosis I. This is Spermatogenesis-associated protein 22 from Homo sapiens (Human).